We begin with the raw amino-acid sequence, 365 residues long: Ferredoxin--NADP reductase, chloroplastic (365 aa).

The disordered stretch occupies residues 1 to 22 (MAAAVTAAVSFPSTKSTPLSTR). The segment covering 11-22 (FPSTKSTPLSTR) has biased composition (polar residues). Residues 86-208 (KNPYTGRCLL…TGPVGKEMLM (123 aa)) form the FAD-binding FR-type domain. Residues 144-147 (RLYS), 165-167 (CVK), Tyr-171, 182-184 (VCS), and Thr-223 contribute to the FAD site. NADP(+) is bound by residues Ser-147 and Lys-167. NADP(+) is bound by residues Thr-223, 255–256 (VP), 285–286 (SR), Lys-295, 324–325 (GL), and Glu-363.

This sequence belongs to the ferredoxin--NADP reductase type 1 family. It depends on FAD as a cofactor.

The protein resides in the plastid. It is found in the chloroplast stroma. Its subcellular location is the chloroplast thylakoid membrane. The catalysed reaction is 2 reduced [2Fe-2S]-[ferredoxin] + NADP(+) + H(+) = 2 oxidized [2Fe-2S]-[ferredoxin] + NADPH. The protein operates within energy metabolism; photosynthesis. In terms of biological role, may play a key role in regulating the relative amounts of cyclic and non-cyclic electron flow to meet the demands of the plant for ATP and reducing power. The chain is Ferredoxin--NADP reductase, chloroplastic (PETH) from Mesembryanthemum crystallinum (Common ice plant).